The primary structure comprises 519 residues: bZIP transcription factor 30 (519 aa).

5 disordered regions span residues 1–30, 45–83, 108–202, 222–295, and 315–339; these read MGGG…IPKH, FRHP…QPSS, TGAG…RKPE, VLNS…TGRH, and SSLK…NSSA. A compositionally biased stretch (pro residues) spans 51–61; it reads GAPPPPIPPIS. The span at 149 to 173 shows a compositional bias: polar residues; the sequence is SDVTFGFSSMMSQNQKSPPLSSLER. The segment covering 187–202 has biased composition (basic and acidic residues); it reads VKKEPREGFYKGRKPE. Low complexity-rich tracts occupy residues 244–268 and 317–329; these read SRGS…SASG and LKLP…KVSP. Positions 330–339 are enriched in polar residues; that stretch reads TNSGEGNSSA. Residues 372–393 are basic motif; that stretch reads KRVKRILANRVSAARSKERKTR. Residues 386–460 adopt a coiled-coil conformation; sequence RSKERKTRYM…SEKLNEEVQR (75 aa). The leucine-zipper stretch occupies residues 398–433; sequence LEHKVQTLQTEATTLSAQLTHLQRDSMGLTNQNSEL. Residues 465–519 form a disordered region; sequence IGEPNRRQSGSSSSESKMSLNPEMFQQLSISQLQHQQMQHSNQCSTMKAKHTSND. Low complexity-rich tracts occupy residues 473 to 483 and 490 to 509; these read SGSSSSESKMS and QQLS…NQCS.

Interacts with WUS, HEC1, KNAT1, KNAT2, HAT1, BEL1, and NGA1. Expressed in inflorescence meristem, floral organ primordia, gynoecia, ovules and carpel margin meristem.

It localises to the nucleus. Functionally, transcription factor that acts as a repressor of reproductive development, meristem size and plant growth. Acts as a transcriptional repressor in inflorescence tissues. Interacts with well known regulators of meristem and gynoecium development such as WUS, HEC1, KNAT1, KNAT2, HAT1, BEL1 and NGA1. Acts as a positive regulator of JAG and OFP1 expression in developing gynoecia. This is bZIP transcription factor 30 from Arabidopsis thaliana (Mouse-ear cress).